We begin with the raw amino-acid sequence, 546 residues long: Intermembrane transport protein PqiB (546 aa).

The Cytoplasmic segment spans residues 1-15; the sequence is MESNNGEAKIQKVKN. Residues 16–36 form a helical membrane-spanning segment; the sequence is WSPVWIFPIVTALIGAWVLFY. Topologically, residues 37 to 546 are periplasmic; sequence HYSHQGPEVT…KDPEPKRAKQ (510 aa). 3 MCE/MlaD regions span residues 42 to 133, 158 to 217, and 285 to 389; these read GPEV…LQPG, IRVI…NNVR, and HIDY…LDFY. Positions 437 to 464 form a coiled coil; the sequence is IEQATSTLSESQRTMKNLQTTLDSMNKI.

This sequence belongs to the PqiB family. Homohexamer. May form a complex composed of PqiA, PqiB and PqiC. Interacts with PqiC.

The protein resides in the cell inner membrane. Forms a tunnel that spans the entire periplasmic space. Could be implicated in lipid transport between the inner membrane and the outer membrane. Binds phospholipids. Required for outer membrane homeostasis. Contributes to membrane integrity. The polypeptide is Intermembrane transport protein PqiB (Escherichia coli (strain K12)).